A 281-amino-acid polypeptide reads, in one-letter code: UPF0500 protein C1orf216 homolog (281 aa).

Over residues 1 to 12 (MFTIQKPDTVSH) the composition is skewed to polar residues. Residues 1 to 197 (MFTIQKPDTV…SSSDSDSISV (197 aa)) form a disordered region. A compositionally biased stretch (basic and acidic residues) spans 45-74 (TYDKNENWSQDKKGGEEGENKSKSEDEHSS). Low complexity-rich tracts occupy residues 92–102 (STGSEGISLSS), 147–161 (SSSL…VSAS), and 169–178 (PAPTTTPQEN). Positions 179–190 (PETEDSDVESSS) are enriched in acidic residues. Residues 198–257 (TLSEAFQSLQDKEKLKEREKEKHHAQLTMYRRLALLRWIRALQQKVRDQQNRLQESFDTI) are a coiled coil.

This sequence belongs to the UPF0500 family.

This chain is UPF0500 protein C1orf216 homolog, found in Xenopus laevis (African clawed frog).